A 105-amino-acid chain; its full sequence is Large ribosomal subunit protein bL21c (105 aa).

Belongs to the bacterial ribosomal protein bL21 family. Part of the 50S ribosomal subunit.

The protein localises to the plastid. It is found in the chloroplast. In terms of biological role, this protein binds to 23S rRNA. The sequence is that of Large ribosomal subunit protein bL21c from Trieres chinensis (Marine centric diatom).